The following is a 175-amino-acid chain: Alpha-crystallin B chain (175 aa).

M1 carries the N-acetylmethionine modification. S19 bears the Phosphoserine mark. S41 is a glycosylation site (O-linked (GlcNAc) serine). Phosphoserine occurs at positions 45 and 59. The sHSP domain occupies R56–E164. H83 contributes to the Zn(2+) binding site. Residue K92 is modified to N6-acetyllysine. Zn(2+) is bound by residues H104, E106, H111, and H119. Residues V142 to K175 form a disordered region. K166 carries the N6-acetyllysine modification. A glycan (O-linked (GlcNAc) threonine) is linked at T170.

It belongs to the small heat shock protein (HSP20) family. As to quaternary structure, heteromer composed of three CRYAA and one CRYAB subunits. Aggregates with homologous proteins, including the small heat shock protein HSPB1, to form large heteromeric complexes. Inter-subunit bridging via zinc ions enhances stability, which is crucial as there is no protein turn over in the lens. Interacts with HSPBAP1 and TTN/titin. Interacts with TMEM109; in the cellular response to DNA damage. Interacts with DES; binds rapidly during early stages of DES filament assembly and a reduced binding seen in the later stages. Interacts with ATP6V1A and with MTOR, forming a ternary complex. As to expression, lens as well as other tissues.

It localises to the cytoplasm. The protein resides in the nucleus. Its subcellular location is the secreted. The protein localises to the lysosome. May contribute to the transparency and refractive index of the lens. Has chaperone-like activity, preventing aggregation of various proteins under a wide range of stress conditions. In lens epithelial cells, stabilizes the ATP6V1A protein, preventing its degradation by the proteasome. The polypeptide is Alpha-crystallin B chain (CRYAB) (Spalax judaei (Judean Mountains blind mole rat)).